The sequence spans 214 residues: Holliday junction branch migration complex subunit RuvA (214 aa).

The interval 1–67 (MVGWLKGLIV…ADNWQFFGFK (67 aa)) is domain I. Residues 68-146 (STQERDIFRE…AFAGMDPAPS (79 aa)) are domain II. Residues 147-154 (LAEGVSSE) are flexible linker. The interval 155–214 (QMPESGADVEATLSMLGYDDLEVRRAIRAIAEGSDGPPPPGDDQDAWLRGCLQWLSRDSA) is domain III.

It belongs to the RuvA family. In terms of assembly, homotetramer. Forms an RuvA(8)-RuvB(12)-Holliday junction (HJ) complex. HJ DNA is sandwiched between 2 RuvA tetramers; dsDNA enters through RuvA and exits via RuvB. An RuvB hexamer assembles on each DNA strand where it exits the tetramer. Each RuvB hexamer is contacted by two RuvA subunits (via domain III) on 2 adjacent RuvB subunits; this complex drives branch migration. In the full resolvosome a probable DNA-RuvA(4)-RuvB(12)-RuvC(2) complex forms which resolves the HJ.

The protein localises to the cytoplasm. The RuvA-RuvB-RuvC complex processes Holliday junction (HJ) DNA during genetic recombination and DNA repair, while the RuvA-RuvB complex plays an important role in the rescue of blocked DNA replication forks via replication fork reversal (RFR). RuvA specifically binds to HJ cruciform DNA, conferring on it an open structure. The RuvB hexamer acts as an ATP-dependent pump, pulling dsDNA into and through the RuvAB complex. HJ branch migration allows RuvC to scan DNA until it finds its consensus sequence, where it cleaves and resolves the cruciform DNA. The sequence is that of Holliday junction branch migration complex subunit RuvA from Synechococcus sp. (strain CC9605).